A 484-amino-acid polypeptide reads, in one-letter code: MQSHQNRSRLSLILRSRFIPSFSSPLSLFVVLAAVPLPIYFSGLLSGRNNKPLSVMRLNSNLASSMVESNISCTTFNILAPIYKRVDQKNHSTRESDFRTLWLARNQRILDLLLHQRSSVICLQEVWVGNEELVNMYHHQLSSSGYTIYQLARTNSRGDGLLTAIHKDHFKVVNYRELLFNDFGDRVAQLLHVKTVIPFPLNGKQDVQQEVIIVNTHLLFPHDSSLSIVRLHQVYKILEYLEAYQKENKLNHMPIILCGDWNGSKRGHVYKFLRSQGFISSYDDAHQYTDSDAHRWVSHRNHRGNICGVDFIWLCNPSDSRKPLRTSWVEAVFSIIKYQLHKASIAEDDAFTFLGAKNHSDSLTYSDFCLALQKVNLTGIPHGLSFEETKELWVRADLDGNGVFDYEELKKIWNMTMVNQPGNCKESVMESKKEEGEDEAIGLKVNKAILFPQEAEKGLWPENYNISDHACLTVQFSPVKMLCS.

The chain crosses the membrane as a helical span at residues 25 to 45 (PLSLFVVLAAVPLPIYFSGLL). Residues 384–419 (LSFEETKELWVRADLDGNGVFDYEELKKIWNMTMVN) enclose the EF-hand domain. Ca(2+) contacts are provided by Asp397, Asp399, Asn401, and Glu408.

It is found in the membrane. This is an uncharacterized protein from Arabidopsis thaliana (Mouse-ear cress).